The sequence spans 161 residues: pEARLI1-like lipid transfer protein 1 (161 aa).

The first 25 residues, 1–25, serve as a signal peptide directing secretion; it reads MASKNSASLALFFALNILFFTLTVA. Residues 32-39 form an A-1 repeat; sequence PSPKPKPV. Positions 32-76 are disordered; the sequence is PSPKPKPVPSPKPKPVQCPPPPRPSVPSPNPRPVTPPRTPGSSGN. The span at 33 to 70 shows a compositional bias: pro residues; it reads SPKPKPVPSPKPKPVQCPPPPRPSVPSPNPRPVTPPRT. The tract at residues 34-49 is 2 X 8 AA tandem repeats A of P-S-P-K-P-K-P-V; it reads PKPKPVPSPKPKPVQC. The stretch at 40–47 is one A-2 repeat; the sequence is PSPKPKPV.

This sequence belongs to the plant LTP family. PEARLI1 subfamily. Self-interacts and binds to DIR1. Interacts with PDLP1.

The protein localises to the secreted. The protein resides in the cell wall. Its subcellular location is the endoplasmic reticulum. It is found in the cell junction. It localises to the plasmodesma. The protein localises to the plastid. The protein resides in the chloroplast. Functionally, probable lipid transfer protein (LTP). Seems to control the flowering process and lignin synthesis. Together with DIR1, required for glycerol-3-phosphate- (G3P) and azelaic acid- (AA) induced systemic acquired resistance (SAR). Component of plant systemic immunity involved in priming defenses in a AA-dependent manner, by modulating production and/or translocation of a mobile signal(s) during SAR. Confers resistance to Botrytis cinerea and Pseudomonas syringae pv. tomato DC3000 and PmaDG3. May be involved in induced systemic resistance (ISR) mediated by non-pathogenic bacteria (e.g. P. fluorescens GM30). Prevents electrolyte leakage during freezing damage. This Arabidopsis thaliana (Mouse-ear cress) protein is pEARLI1-like lipid transfer protein 1 (AZI1).